The chain runs to 306 residues: Glutaminase (306 aa).

The substrate site is built by serine 66, asparagine 116, glutamate 159, asparagine 166, tyrosine 190, tyrosine 242, and valine 260.

This sequence belongs to the glutaminase family. Homotetramer.

It carries out the reaction L-glutamine + H2O = L-glutamate + NH4(+). The sequence is that of Glutaminase from Caulobacter vibrioides (strain ATCC 19089 / CIP 103742 / CB 15) (Caulobacter crescentus).